Reading from the N-terminus, the 98-residue chain is NADH-ubiquinone oxidoreductase chain 4L (98 aa).

The next 3 helical transmembrane spans lie at 1–21 (MSIV…GTLL), 29–49 (SLMC…LISL), and 59–79 (VPLI…ALLV).

This sequence belongs to the complex I subunit 4L family. As to quaternary structure, core subunit of respiratory chain NADH dehydrogenase (Complex I) which is composed of 45 different subunits.

It is found in the mitochondrion inner membrane. The catalysed reaction is a ubiquinone + NADH + 5 H(+)(in) = a ubiquinol + NAD(+) + 4 H(+)(out). In terms of biological role, core subunit of the mitochondrial membrane respiratory chain NADH dehydrogenase (Complex I) which catalyzes electron transfer from NADH through the respiratory chain, using ubiquinone as an electron acceptor. Part of the enzyme membrane arm which is embedded in the lipid bilayer and involved in proton translocation. The polypeptide is NADH-ubiquinone oxidoreductase chain 4L (MT-ND4L) (Hemiechinus auritus (Long-eared hedgehog)).